The sequence spans 337 residues: 15-cis-phytoene synthase (337 aa).

Belongs to the phytoene/squalene synthase family. ATP is required as a cofactor. The cofactor is Mn(2+). Mg(2+) serves as cofactor.

The catalysed reaction is 2 (2E,6E,10E)-geranylgeranyl diphosphate = 15-cis-phytoene + 2 diphosphate. It functions in the pathway carotenoid biosynthesis; phytoene biosynthesis. Its function is as follows. Involved in the biosynthesis of carotenoids. Catalyzes the condensation of two molecules of geranylgeranyl diphosphate (GGPP) to give prephytoene diphosphate (PPPP) and the subsequent rearrangement of the cyclopropylcarbinyl intermediate to yield 15-cis-phytoene. This Synechocystis sp. (strain ATCC 27184 / PCC 6803 / Kazusa) protein is 15-cis-phytoene synthase (crtB).